Consider the following 505-residue polypeptide: AMP phosphorylase (505 aa).

AMP contacts are provided by residues G170, 196 to 201 (SRAITS), and T205. Residue D258 is the Proton donor of the active site. AMP-binding residues include S266 and K290.

Belongs to the thymidine/pyrimidine-nucleoside phosphorylase family. Type 2 subfamily.

The catalysed reaction is AMP + phosphate = alpha-D-ribose 1,5-bisphosphate + adenine. The enzyme catalyses CMP + phosphate = cytosine + alpha-D-ribose 1,5-bisphosphate. It catalyses the reaction UMP + phosphate = alpha-D-ribose 1,5-bisphosphate + uracil. In terms of biological role, catalyzes the conversion of AMP and phosphate to adenine and ribose 1,5-bisphosphate (R15P). Exhibits phosphorylase activity toward CMP and UMP in addition to AMP. Functions in an archaeal AMP degradation pathway, together with R15P isomerase and RubisCO. The protein is AMP phosphorylase of Methanococcus maripaludis (strain C6 / ATCC BAA-1332).